Reading from the N-terminus, the 140-residue chain is Ribonucleases P/MRP protein subunit POP7 (140 aa).

The segment at 1–21 is disordered; that stretch reads MALKKNTHNKSTKRVTKHPSL. At S115 the chain carries Phosphoserine.

Belongs to the histone-like Alba family. As to quaternary structure, component of nuclear RNase P and RNase MRP complexes. RNase P consists of an RNA moiety and at least 9 protein subunits including POP1, POP3, POP4, POP5, POP6, POP7, POP8, RPP1 and RPR2. RNase MRP complex consists of an RNA moiety and at least 10 protein subunits including POP1, POP3, POP4, POP5, POP6, POP7, POP8, RMP1, RPP1 and SNM1, many of which are shared with the RNase P complex.

It is found in the nucleus. It catalyses the reaction Endonucleolytic cleavage of RNA, removing 5'-extranucleotides from tRNA precursor.. In terms of biological role, component of ribonuclease P, a protein complex that generates mature tRNA molecules by cleaving their 5'-ends. Also a component of RNase MRP, which cleaves pre-rRNA sequences. In Saccharomyces cerevisiae (strain ATCC 204508 / S288c) (Baker's yeast), this protein is Ribonucleases P/MRP protein subunit POP7 (POP7).